Here is a 1070-residue protein sequence, read N- to C-terminus: Error-prone DNA polymerase (1070 aa).

The protein belongs to the DNA polymerase type-C family. DnaE2 subfamily.

The protein localises to the cytoplasm. It catalyses the reaction DNA(n) + a 2'-deoxyribonucleoside 5'-triphosphate = DNA(n+1) + diphosphate. Functionally, DNA polymerase involved in damage-induced mutagenesis and translesion synthesis (TLS). It is not the major replicative DNA polymerase. This is Error-prone DNA polymerase from Aromatoleum aromaticum (strain DSM 19018 / LMG 30748 / EbN1) (Azoarcus sp. (strain EbN1)).